The primary structure comprises 122 residues: MIQQESRLRVADNSGAKELLVIRVLGGTKRKYAAIGDIVVCSVKSAQPGGMVKKGDVVKAVIVRTTKPLGRADGSYIRFDDNAAVIIKDDKNPVGTRIFGSVTRELRANNFMKIISLAPEVL.

The protein belongs to the universal ribosomal protein uL14 family. As to quaternary structure, part of the 50S ribosomal subunit. Forms a cluster with proteins L3 and L19. In the 70S ribosome, L14 and L19 interact and together make contacts with the 16S rRNA in bridges B5 and B8.

Its function is as follows. Binds to 23S rRNA. Forms part of two intersubunit bridges in the 70S ribosome. This chain is Large ribosomal subunit protein uL14, found in Finegoldia magna (strain ATCC 29328 / DSM 20472 / WAL 2508) (Peptostreptococcus magnus).